A 233-amino-acid chain; its full sequence is UPF0128 protein MJ1463 (233 aa).

This sequence belongs to the UPF0128 family.

The polypeptide is UPF0128 protein MJ1463 (Methanocaldococcus jannaschii (strain ATCC 43067 / DSM 2661 / JAL-1 / JCM 10045 / NBRC 100440) (Methanococcus jannaschii)).